The following is a 160-amino-acid chain: MRLTVIAIGKLKQGPERELAERYRGRFDDLGRKLGFRGLDIHEIAESRARDAAGRMAEEAAAIAALIAEGSSLVTLDERGKSVDSAAFAAQLGRWRDESVPGTIFVIGGADGLLPELRRKAKLCLSFGAATWPHQMVRVMLLEQIYRAATILAGHPYHRA.

S-adenosyl-L-methionine contacts are provided by Leu-76 and Gly-108.

The protein belongs to the RNA methyltransferase RlmH family. Homodimer.

The protein resides in the cytoplasm. The enzyme catalyses pseudouridine(1915) in 23S rRNA + S-adenosyl-L-methionine = N(3)-methylpseudouridine(1915) in 23S rRNA + S-adenosyl-L-homocysteine + H(+). Functionally, specifically methylates the pseudouridine at position 1915 (m3Psi1915) in 23S rRNA. This chain is Ribosomal RNA large subunit methyltransferase H, found in Rhodopseudomonas palustris (strain BisB5).